The sequence spans 77 residues: MSVAFVPDWLRGKAEVNQETIQRLLEENDQLIRCIVEYQNKGRGNECVQYQHVLHRNLIYLATIADASPTSTSKAME.

Residues 50 to 53 carry the SH2-binding motif; it reads YQHV.

This sequence belongs to the SS18 family.

This Homo sapiens (Human) protein is SS18-like protein 2 (SS18L2).